A 450-amino-acid chain; its full sequence is D-inositol 3-phosphate glycosyltransferase (450 aa).

His26 lines the 1D-myo-inositol 3-phosphate pocket. Residues 32–33 and Gly40 each bind UDP-N-acetyl-alpha-D-glucosamine; that span reads QP. 1D-myo-inositol 3-phosphate-binding positions include 37-42, Lys95, Tyr128, Thr152, and Arg172; that span reads DAGGMN. The UDP-N-acetyl-alpha-D-glucosamine site is built by Arg246, Lys251, and Gln313. Tyr322, Arg323, and Ala325 together coordinate Mg(2+). 2 residues coordinate UDP-N-acetyl-alpha-D-glucosamine: Glu335 and Glu343. Thr349 provides a ligand contact to Mg(2+).

This sequence belongs to the glycosyltransferase group 1 family. MshA subfamily. In terms of assembly, homodimer.

It carries out the reaction 1D-myo-inositol 3-phosphate + UDP-N-acetyl-alpha-D-glucosamine = 1D-myo-inositol 2-acetamido-2-deoxy-alpha-D-glucopyranoside 3-phosphate + UDP + H(+). In terms of biological role, catalyzes the transfer of a N-acetyl-glucosamine moiety to 1D-myo-inositol 3-phosphate to produce 1D-myo-inositol 2-acetamido-2-deoxy-glucopyranoside 3-phosphate in the mycothiol biosynthesis pathway. The chain is D-inositol 3-phosphate glycosyltransferase from Mycolicibacterium vanbaalenii (strain DSM 7251 / JCM 13017 / BCRC 16820 / KCTC 9966 / NRRL B-24157 / PYR-1) (Mycobacterium vanbaalenii).